The following is a 335-amino-acid chain: Nucleoid-associated protein KPK_1538 (335 aa).

The protein belongs to the YejK family.

It is found in the cytoplasm. The protein localises to the nucleoid. In Klebsiella pneumoniae (strain 342), this protein is Nucleoid-associated protein KPK_1538.